Consider the following 214-residue polypeptide: Probable GTP-binding protein EngB (214 aa).

Residues 24 to 199 (GGYEVAFAGR…RGIVGGWLGL (176 aa)) form the EngB-type G domain. GTP-binding positions include 32-39 (GRSNAGKS), 59-63 (GRTQQ), 77-80 (DLPG), 144-147 (TKAD), and 178-180 (YSG). Positions 39 and 61 each coordinate Mg(2+).

Belongs to the TRAFAC class TrmE-Era-EngA-EngB-Septin-like GTPase superfamily. EngB GTPase family. It depends on Mg(2+) as a cofactor.

Functionally, necessary for normal cell division and for the maintenance of normal septation. The polypeptide is Probable GTP-binding protein EngB (Xanthomonas axonopodis pv. citri (strain 306)).